Here is a 98-residue protein sequence, read N- to C-terminus: Co-chaperonin GroES (98 aa).

It belongs to the GroES chaperonin family. In terms of assembly, heptamer of 7 subunits arranged in a ring. Interacts with the chaperonin GroEL.

Its subcellular location is the cytoplasm. In terms of biological role, together with the chaperonin GroEL, plays an essential role in assisting protein folding. The GroEL-GroES system forms a nano-cage that allows encapsulation of the non-native substrate proteins and provides a physical environment optimized to promote and accelerate protein folding. GroES binds to the apical surface of the GroEL ring, thereby capping the opening of the GroEL channel. This is Co-chaperonin GroES from Bartonella tribocorum (strain CIP 105476 / IBS 506).